The sequence spans 482 residues: Alanine aminotransferase 2 (482 aa).

Position 299 is an N6-(pyridoxal phosphate)lysine (Lys-299).

It belongs to the class-I pyridoxal-phosphate-dependent aminotransferase family. Alanine aminotransferase subfamily. Homodimer. The cofactor is pyridoxal 5'-phosphate. The N-terminus is blocked. In terms of tissue distribution, mesophyll and bundle sheath cells.

It carries out the reaction L-alanine + 2-oxoglutarate = pyruvate + L-glutamate. Its pathway is photosynthesis; C4 acid pathway. It functions in the pathway amino-acid degradation; L-alanine degradation via transaminase pathway; pyruvate from L-alanine: step 1/1. In terms of biological role, transfer of C3 units between the cytosol of mesophyll and bundle sheath cells to maintain a nitrogen-carbon balance in the C4-dicarboxylic pathway. This is Alanine aminotransferase 2 from Panicum miliaceum (Proso millet).